The sequence spans 315 residues: Voltage-dependent calcium channel gamma-3 subunit (315 aa).

The next 4 helical transmembrane spans lie at 8–28 (IQMLITTVGAFAAFSLMTIAV), 104–124 (SSVFPILSVTLLFFGGLCVAA), 135–155 (ILSAGIFFVSAGLSNIIGIIV), and 181–201 (FGAFSFIIAEIVGVVAVHIYI). The disordered stretch occupies residues 232 to 253 (RRRSSSRSTEPRSRDLSPISKG). The residue at position 248 (Ser248) is a Phosphoserine.

It belongs to the PMP-22/EMP/MP20 family. CACNG subfamily. The L-type calcium channel is composed of five subunits: alpha-1, alpha-2/delta, beta and gamma. Acts as an auxiliary subunit for AMPA-selective glutamate receptors (AMPARs). Found in a complex with GRIA1, GRIA2, GRIA3, GRIA4, CNIH2, CNIH3, CACNG2, CACNG4, CACNG5, CACNG7 and CACNG8. Interacts with AP4M1 and GRIA1; associates GRIA1 with the adaptor protein complex 4 (AP-4) to target GRIA1 to the somatodendritic compartment of neurons.

It is found in the membrane. Its function is as follows. Regulates the trafficking to the somatodendritic compartment and gating properties of AMPA-selective glutamate receptors (AMPARs). Promotes their targeting to the cell membrane and synapses and modulates their gating properties by slowing their rates of activation, deactivation and desensitization. Does not show subunit-specific AMPA receptor regulation and regulates all AMPAR subunits. Thought to stabilize the calcium channel in an inactivated (closed) state. This chain is Voltage-dependent calcium channel gamma-3 subunit (Cacng3), found in Mus musculus (Mouse).